A 152-amino-acid polypeptide reads, in one-letter code: Large ribosomal subunit protein bL9 (152 aa).

The protein belongs to the bacterial ribosomal protein bL9 family.

In terms of biological role, binds to the 23S rRNA. The protein is Large ribosomal subunit protein bL9 of Streptococcus thermophilus (strain CNRZ 1066).